Here is a 668-residue protein sequence, read N- to C-terminus: DNA mismatch repair protein MutL (668 aa).

Belongs to the DNA mismatch repair MutL/HexB family.

In terms of biological role, this protein is involved in the repair of mismatches in DNA. It is required for dam-dependent methyl-directed DNA mismatch repair. May act as a 'molecular matchmaker', a protein that promotes the formation of a stable complex between two or more DNA-binding proteins in an ATP-dependent manner without itself being part of a final effector complex. The sequence is that of DNA mismatch repair protein MutL from Limosilactobacillus reuteri (strain DSM 20016) (Lactobacillus reuteri).